Consider the following 207-residue polypeptide: Thymidylate kinase (207 aa).

Position 7-14 (glycine 7–serine 14) interacts with ATP.

The protein belongs to the thymidylate kinase family.

The enzyme catalyses dTMP + ATP = dTDP + ADP. Functionally, phosphorylation of dTMP to form dTDP in both de novo and salvage pathways of dTTP synthesis. This is Thymidylate kinase from Chlamydia caviae (strain ATCC VR-813 / DSM 19441 / 03DC25 / GPIC) (Chlamydophila caviae).